Consider the following 334-residue polypeptide: Hydroxyproline O-arabinosyltransferase NOD3 (334 aa).

A helical; Signal-anchor transmembrane segment spans residues 1–18; the sequence is LLMVLGFFFATYNLVSMI.

This sequence belongs to the RDN family.

It localises to the golgi apparatus membrane. The enzyme catalyses trans-4-hydroxy-L-prolyl-[protein] + UDP-beta-L-arabinofuranose = O-(beta-L-arabinofuranosyl)-trans-4-hydroxy-L-prolyl-[protein] + UDP + H(+). Probable glycosyltransferase involved in the O-arabinosylation of several proteins including extensins and small signaling peptides. Catalyzes the transfer of the initial L-arabinose to the hydroxyl group of Hyp residues. Probably involved in the arabinosylation of CLAVATA3/ESR-related (CLE) signaling peptides that move from root to shoot, to interact with receptor kinase signaling that regulates nodulation. Involved in long distance nodulation signaling events. Involved in the autoregulation of nodulation (AON), a long distance systemic signaling from root to shoot and back again, which allows legumes to limit the number of root nodules formed based on available nitrogen and previous rhizobial colonization. This chain is Hydroxyproline O-arabinosyltransferase NOD3, found in Pisum sativum (Garden pea).